A 137-amino-acid polypeptide reads, in one-letter code: Small ribosomal subunit protein uS9c (137 aa).

The disordered stretch occupies residues 106 to 137 (KSEGYLTRDPRVKERKKYGLKKARKAPQFSKR). Over residues 118–137 (KERKKYGLKKARKAPQFSKR) the composition is skewed to basic residues.

This sequence belongs to the universal ribosomal protein uS9 family.

Its subcellular location is the plastid. It is found in the chloroplast. The chain is Small ribosomal subunit protein uS9c (rps9) from Pyropia yezoensis (Susabi-nori).